We begin with the raw amino-acid sequence, 500 residues long: Cysteine--tRNA ligase (500 aa).

Zn(2+) is bound at residue C29. A 'HIGH' region motif is present at residues V31 to H41. Zn(2+) is bound by residues C213, H238, and E242. Residues K270–S274 carry the 'KMSKS' region motif. K273 is an ATP binding site.

This sequence belongs to the class-I aminoacyl-tRNA synthetase family. As to quaternary structure, monomer. Zn(2+) serves as cofactor.

It localises to the cytoplasm. The catalysed reaction is tRNA(Cys) + L-cysteine + ATP = L-cysteinyl-tRNA(Cys) + AMP + diphosphate. The protein is Cysteine--tRNA ligase of Prochlorococcus marinus (strain NATL2A).